A 281-amino-acid chain; its full sequence is Ribosomal RNA small subunit methyltransferase A (281 aa).

Residues asparagine 36, leucine 38, glycine 63, glutamate 84, aspartate 109, and asparagine 127 each contribute to the S-adenosyl-L-methionine site.

It belongs to the class I-like SAM-binding methyltransferase superfamily. rRNA adenine N(6)-methyltransferase family. RsmA subfamily.

It localises to the cytoplasm. It catalyses the reaction adenosine(1518)/adenosine(1519) in 16S rRNA + 4 S-adenosyl-L-methionine = N(6)-dimethyladenosine(1518)/N(6)-dimethyladenosine(1519) in 16S rRNA + 4 S-adenosyl-L-homocysteine + 4 H(+). In terms of biological role, specifically dimethylates two adjacent adenosines (A1518 and A1519) in the loop of a conserved hairpin near the 3'-end of 16S rRNA in the 30S particle. May play a critical role in biogenesis of 30S subunits. This is Ribosomal RNA small subunit methyltransferase A from Borreliella afzelii (strain PKo) (Borrelia afzelii).